A 210-amino-acid chain; its full sequence is Frataxin, mitochondrial (210 aa).

Residues 1–41 constitute a mitochondrion transit peptide; that stretch reads MWTLGRRAVAGLLASPSPAQAQTLTRVPRPAELAPLCGRRG.

The protein belongs to the frataxin family. As to quaternary structure, component of the mitochondrial core iron-sulfur cluster (ISC) complex composed of NFS1, LYRM4, NDUFAB1, ISCU, FXN, and FDX2; this complex is a heterohexamer containing two copies of each monomer. Homodimer. Monomer (probable predominant form). Oligomer. Monomers and polymeric aggregates of &gt;1 MDa have been isolated from mitochondria. A small fraction of heterologous overexpressed recombinant frataxin forms high-molecular weight aggregates that incorporate iron. Interacts with LYRM4. Interacts (via ferrous form) with ISCU; the interaction is possible when both are bound to the dimeric form of the cysteine desulfurase complex (NFS1:LYRM4) and the interaction enhances FXN interaction to the dimeric form of the cysteine desulfurase complex (NFS1:LYRM4). Interacts with FECH; one iron-bound FXN monomer seems to interact with a FECH homodimer. Interacts with SDHA and SDHB. Interacts with ACO2; the interaction is dependent on citrate. Interacts with HSPA9. In terms of assembly, interacts with ACO1. Interacts with ISCU (cytoplasmic form). Processed in two steps by mitochondrial processing peptidase (MPP). MPP first cleaves the precursor to intermediate form and subsequently converts the intermediate to yield frataxin mature form (frataxin(81-210)) which is the predominant form. The additional forms, frataxin(56-210) and frataxin(78-210), seem to be produced when the normal maturation process is impaired; their physiological relevance is unsure. Expressed in the heart, peripheral blood lymphocytes and dermal fibroblasts.

The protein resides in the mitochondrion. It localises to the cytoplasm. Its subcellular location is the cytosol. It catalyses the reaction 4 Fe(2+) + O2 + 4 H(+) = 4 Fe(3+) + 2 H2O. Its function is as follows. Functions as an activator of persulfide transfer to the scaffoding protein ISCU as component of the core iron-sulfur cluster (ISC) assembly complex and participates to the [2Fe-2S] cluster assembly. Accelerates sulfur transfer from NFS1 persulfide intermediate to ISCU and to small thiols such as L-cysteine and glutathione leading to persulfuration of these thiols and ultimately sulfide release. Binds ferrous ion and is released from FXN upon the addition of both L-cysteine and reduced FDX2 during [2Fe-2S] cluster assembly. The core iron-sulfur cluster (ISC) assembly complex is involved in the de novo synthesis of a [2Fe-2S] cluster, the first step of the mitochondrial iron-sulfur protein biogenesis. This process is initiated by the cysteine desulfurase complex (NFS1:LYRM4:NDUFAB1) that produces persulfide which is delivered on the scaffold protein ISCU in a FXN-dependent manner. Then this complex is stabilized by FDX2 which provides reducing equivalents to accomplish the [2Fe-2S] cluster assembly. Finally, the [2Fe-2S] cluster is transferred from ISCU to chaperone proteins, including HSCB, HSPA9 and GLRX5. May play a role in the protection against iron-catalyzed oxidative stress through its ability to catalyze the oxidation of Fe(2+) to Fe(3+); the oligomeric form but not the monomeric form has in vitro ferroxidase activity. May be able to store large amounts of iron in the form of a ferrihydrite mineral by oligomerization; however, the physiological relevance is unsure as reports are conflicting and the function has only been shown using heterologous overexpression systems. May function as an iron chaperone protein that protects the aconitase [4Fe-4S]2+ cluster from disassembly and promotes enzyme reactivation. May play a role as a high affinity iron binding partner for FECH that is capable of both delivering iron to ferrochelatase and mediating the terminal step in mitochondrial heme biosynthesis. In terms of biological role, modulates the RNA-binding activity of ACO1. May be involved in the cytoplasmic iron-sulfur protein biogenesis. May contribute to oxidative stress resistance and overall cell survival. This Homo sapiens (Human) protein is Frataxin, mitochondrial.